A 178-amino-acid polypeptide reads, in one-letter code: Crossover junction endodeoxyribonuclease RuvC (178 aa).

Active-site residues include aspartate 20, glutamate 80, and aspartate 154. Positions 20, 80, and 154 each coordinate Mg(2+).

This sequence belongs to the RuvC family. In terms of assembly, homodimer which binds Holliday junction (HJ) DNA. The HJ becomes 2-fold symmetrical on binding to RuvC with unstacked arms; it has a different conformation from HJ DNA in complex with RuvA. In the full resolvosome a probable DNA-RuvA(4)-RuvB(12)-RuvC(2) complex forms which resolves the HJ. Mg(2+) is required as a cofactor.

It is found in the cytoplasm. It carries out the reaction Endonucleolytic cleavage at a junction such as a reciprocal single-stranded crossover between two homologous DNA duplexes (Holliday junction).. Its function is as follows. The RuvA-RuvB-RuvC complex processes Holliday junction (HJ) DNA during genetic recombination and DNA repair. Endonuclease that resolves HJ intermediates. Cleaves cruciform DNA by making single-stranded nicks across the HJ at symmetrical positions within the homologous arms, yielding a 5'-phosphate and a 3'-hydroxyl group; requires a central core of homology in the junction. The consensus cleavage sequence is 5'-(A/T)TT(C/G)-3'. Cleavage occurs on the 3'-side of the TT dinucleotide at the point of strand exchange. HJ branch migration catalyzed by RuvA-RuvB allows RuvC to scan DNA until it finds its consensus sequence, where it cleaves and resolves the cruciform DNA. This is Crossover junction endodeoxyribonuclease RuvC from Rhodopirellula baltica (strain DSM 10527 / NCIMB 13988 / SH1).